The following is a 755-amino-acid chain: Dynamin-1-like protein (755 aa).

Met-1 is modified (N-acetylmethionine). The region spanning 22–315 is the Dynamin-type G domain; sequence IIQLPQIVVV…LMHHIRDCLP (294 aa). The segment at 32 to 39 is G1 motif; it reads GTQSSGKS. Position 32-40 (32-40) interacts with GTP; it reads GTQSSGKSS. The interval 58-60 is G2 motif; sequence VTR. The interval 159–162 is G3 motif; sequence DLPG. The segment at 228-231 is G4 motif; it reads TKLD. Residues 228 to 234 and 259 to 262 contribute to the GTP site; these read TKLDLMD and NRSQ. The tract at residues 258 to 261 is G5 motif; sequence VNRS. Residues 357–502 form a middle domain region; it reads YCNTIEGTAK…NEMVHNLVAI (146 aa). The segment at 461-704 is interaction with GSK3B; it reads NYSTQELLRF…NHVKDTLQSE (244 aa). The tract at residues 515–582 is b domain; the sequence is ADACGLMNNN…IQDNRRETKN (68 aa). Positions 536-610 are disordered; sequence ELPSAVSRDK…QEPTTGNWRG (75 aa). A Phosphoserine modification is found at Ser-542. Glycyl lysine isopeptide (Lys-Gly) (interchain with G-Cter in SUMO) cross-links involve residues Lys-545 and Lys-548. Residues 550–567 are compositionally biased toward low complexity; sequence PSALAPASQEPSPAASAE. Residue Ser-561 is modified to Phosphoserine. Residues 568–581 are compositionally biased toward basic and acidic residues; sequence ADGKLIQDNRRETK. Residues Lys-571 and Lys-581 each participate in a glycyl lysine isopeptide (Lys-Gly) (interchain with G-Cter in SUMO) cross-link. Over residues 586 to 600 the composition is skewed to gly residues; that stretch reads AGGGIGDGGRIGDGG. O-linked (GlcNAc) threonine glycosylation is found at Thr-604 and Thr-605. A Glycyl lysine isopeptide (Lys-Gly) (interchain with G-Cter in SUMO) cross-link involves residue Lys-613. Residue Lys-616 is modified to N6-acetyllysine; alternate. Lys-616 is covalently cross-linked (Glycyl lysine isopeptide (Lys-Gly) (interchain with G-Cter in SUMO); alternate). Residue Lys-625 forms a Glycyl lysine isopeptide (Lys-Gly) (interchain with G-Cter in SUMO) linkage. Position 626 is a phosphoserine (Ser-626). A Glycyl lysine isopeptide (Lys-Gly) (interchain with G-Cter in SUMO) cross-link involves residue Lys-627. At Ser-635 the chain carries Phosphoserine; by CDK1. Phosphoserine; by CAMK1 and PKA is present on Ser-656. The residue at position 663 (Cys-663) is an S-nitrosocysteine. Residues 663 to 754 enclose the GED domain; the sequence is CEVIERLIKS…IIAEIRETHL (92 aa). Residues 673-687 are important for homodimerization; the sequence is YFLIVRKNIQDSVPK.

This sequence belongs to the TRAFAC class dynamin-like GTPase superfamily. Dynamin/Fzo/YdjA family. In terms of assembly, homotetramer; dimerizes through the N-terminal GTP-middle region of one molecule binding to the GED domain of another DNM1L molecule. Oligomerizes in a GTP-dependent manner to form membrane-associated tubules with a spiral pattern. Interacts with GSK3B and MARCHF5. Interacts (via the GTPase and B domains) with UBE2I; the interaction promotes sumoylation of DNM1L, mainly in its B domain. Interacts with PPP3CA; the interaction dephosphorylates DNM1L and regulates its transition to mitochondria. Interacts with BCL2L1 isoform BCL-X(L) and CLTA; DNM1L and BCL2L1 isoform BCL-X(L) may form a complex in synaptic vesicles that also contains clathrin and MFF. Interacts with MFF; the interaction is inhinited by C11orf65/MFI. Interacts with FIS1. Interacts with MIEF2 and MIEF1; GTP-dependent this regulates GTP hydrolysis and DNM1L oligomerization. Interacts with PGAM5; this interaction leads to dephosphorylation at Ser-656 and activation of GTPase activity and eventually to mitochondria fragmentation. Interacts with RALBP1; during mitosis, recruits DNM1L to the mitochondrion and mediates its activation by the mitotic kinase cyclin B-CDK1. Interacts with FUNDC1; this interaction recruits DNM1L/DRP1 at ER-mitochondria contact sites. Phosphorylation/dephosphorylation events on two sites near the GED domain regulate mitochondrial fission. Phosphorylation on Ser-656 by CAMK1 and PKA inhibits the GTPase activity, leading to a defect in mitochondrial fission promoting mitochondrial elongation. Dephosphorylated on this site by PPP3CA which promotes mitochondrial fission. Phosphorylation on Ser-635 by PINK1 activates the GTPase activity and promotes mitochondrial fission. Phosphorylation on Ser-635 by CDK1 also promotes mitochondrial fission. Phosphorylated in a circadian manner at Ser-656. Dephosphorylated by PGAM5. Post-translationally, sumoylated on various lysine residues within the B domain, probably by MUL1. Sumoylation positively regulates mitochondrial fission. Desumoylated by SENP5 during G2/M transition of mitosis. Appears to be linked to its catalytic activity. In terms of processing, S-nitrosylation increases DNM1L dimerization, mitochondrial fission and causes neuronal damage. O-GlcNAcylation augments the level of the GTP-bound active form of DNM1L and induces translocation from the cytoplasm to mitochondria in cardiomyocytes. It also decreases phosphorylation at Ser-656. Post-translationally, ubiquitination by MARCHF5 affects mitochondrial morphology. Expressed in all tissues tested (at protein level). Longer isoforms are preferentially expressed in brain.

Its subcellular location is the cytoplasm. The protein localises to the cytosol. The protein resides in the golgi apparatus. It is found in the endomembrane system. It localises to the mitochondrion outer membrane. Its subcellular location is the peroxisome. The protein localises to the membrane. The protein resides in the clathrin-coated pit. It is found in the cytoplasmic vesicle. It localises to the secretory vesicle. Its subcellular location is the synaptic vesicle membrane. It catalyses the reaction GTP + H2O = GDP + phosphate + H(+). Its function is as follows. Functions in mitochondrial and peroxisomal division. Mediates membrane fission through oligomerization into membrane-associated tubular structures that wrap around the scission site to constrict and sever the mitochondrial membrane through a GTP hydrolysis-dependent mechanism. The specific recruitment at scission sites is mediated by membrane receptors like MFF, MIEF1 and MIEF2 for mitochondrial membranes. While the recruitment by the membrane receptors is GTP-dependent, the following hydrolysis of GTP induces the dissociation from the receptors and allows DNM1L filaments to curl into closed rings that are probably sufficient to sever a double membrane. Acts downstream of PINK1 to promote mitochondrial fission in a PRKN-dependent manner. Plays an important role in mitochondrial fission during mitosis. Through its function in mitochondrial division, ensures the survival of at least some types of postmitotic neurons, including Purkinje cells, by suppressing oxidative damage. Required for normal brain development, including that of cerebellum. Facilitates developmentally regulated apoptosis during neural tube formation. Required for a normal rate of cytochrome c release and caspase activation during apoptosis; this requirement may depend upon the cell type and the physiological apoptotic cues. Required for formation of endocytic vesicles. Proposed to regulate synaptic vesicle membrane dynamics through association with BCL2L1 isoform Bcl-X(L) which stimulates its GTPase activity in synaptic vesicles; the function may require its recruitment by MFF to clathrin-containing vesicles. Required for programmed necrosis execution. Rhythmic control of its activity following phosphorylation at Ser-656 is essential for the circadian control of mitochondrial ATP production. The sequence is that of Dynamin-1-like protein from Rattus norvegicus (Rat).